The primary structure comprises 251 residues: Transcription initiation factor TFIID subunit 9B (251 aa).

Met1 is subject to N-acetylmethionine. Ser147 is subject to Phosphoserine. Residues Thr159 and Thr174 each carry the phosphothreonine modification. Phosphoserine is present on Ser177. A disordered region spans residues 229–251; it reads QNTANEANPLKRKHEDDDDNDIM.

It belongs to the TAF9 family. Binds TAF5 and TAF6. Component of TFIID and the TATA-binding protein-free TAF complex (TFTC). TFIID is composed of TATA binding protein (TBP) and a number of TBP-associated factors (TAFs). Binds N-terminal domain of p53/TP53 which is essential for transcription.

The protein resides in the nucleus. Functionally, essential for cell viability. TAF9 and TAF9B are involved in transcriptional activation as well as repression of distinct but overlapping sets of genes. May have a role in gene regulation associated with apoptosis. TAFs are components of the transcription factor IID (TFIID) complex, the TBP-free TAFII complex (TFTC), the PCAF histone acetylase complex and the STAGA transcription coactivator-HAT complex. TFIID or TFTC are essential for the regulation of RNA polymerase II-mediated transcription. The protein is Transcription initiation factor TFIID subunit 9B (TAF9B) of Homo sapiens (Human).